A 665-amino-acid polypeptide reads, in one-letter code: Cinnamate reductase (665 aa).

Glutamine 109 provides a ligand contact to FMN. Tyrosine 182 functions as the Proton donor in the catalytic mechanism. Residues arginine 230, arginine 319, and glycine 341–arginine 342 contribute to the FMN site. Residues cysteine 365, cysteine 368, cysteine 372, and cysteine 384 each coordinate [4Fe-4S] cluster. Alanine 415, glutamate 434, asparagine 442, lysine 452, and alanine 479 together coordinate FAD.

The protein in the N-terminal section; belongs to the NADH:flavin oxidoreductase/NADH oxidase family. The cofactor is FMN. Requires FAD as cofactor. [4Fe-4S] cluster serves as cofactor.

It carries out the reaction 3-phenylpropanoate + NAD(+) = (E)-cinnamate + NADH + H(+). The protein operates within amino-acid degradation; L-phenylalanine degradation. In terms of biological role, involved in the fermentation of L-phenylalanine via a Stickland reaction. Catalyzes the reduction of (E)-cinnamate to yield 3-phenylpropionate. This chain is Cinnamate reductase, found in Clostridium sporogenes (strain ATCC 7955 / DSM 767 / NBRC 16411 / NCIMB 8053 / NCTC 8594 / PA 3679).